Here is a 341-residue protein sequence, read N- to C-terminus: Phosphate acyltransferase (341 aa).

Belongs to the PlsX family. Homodimer. Probably interacts with PlsY.

The protein localises to the cytoplasm. It catalyses the reaction a fatty acyl-[ACP] + phosphate = an acyl phosphate + holo-[ACP]. The protein operates within lipid metabolism; phospholipid metabolism. Catalyzes the reversible formation of acyl-phosphate (acyl-PO(4)) from acyl-[acyl-carrier-protein] (acyl-ACP). This enzyme utilizes acyl-ACP as fatty acyl donor, but not acyl-CoA. The polypeptide is Phosphate acyltransferase (Chlorobaculum parvum (strain DSM 263 / NCIMB 8327) (Chlorobium vibrioforme subsp. thiosulfatophilum)).